The sequence spans 219 residues: Mediator of RNA polymerase II transcription subunit 18 (219 aa).

This sequence belongs to the Mediator complex subunit 18 family. As to quaternary structure, component of the Mediator complex. Interacts with YY1 to suppress disease susceptibility via the repression of genes glutaredoxins GRX480, GRXS13 and thioredoxin TRX-h5. Binds to ABI4 to regulate abscisic acid responses; recruited by ABI4 to ABI5 promoter in the presence of abscisic acid (ABA). Interacts with SUF4 to regulate flowering time; recruited by SUF4 to FLC promoter.

Its subcellular location is the nucleus. Its function is as follows. Component of the Mediator complex, a coactivator involved in the regulated transcription of nearly all RNA polymerase II-dependent genes. Mediator functions as a bridge to convey information from gene-specific regulatory proteins to the basal RNA polymerase II transcription machinery. The Mediator complex, having a compact conformation in its free form, is recruited to promoters by direct interactions with regulatory proteins and serves for the assembly of a functional pre-initiation complex with RNA polymerase II and the general transcription factors. Involved in the regulation of histone H3 lysine tri-methylation (H3K36me3). Associates with the promoter, coding and terminator regions of target genes suggesting its function in transcription initiation, elongation and termination. Multifunctional protein which regulates plant immunity, especially during necrotrophic fungal infection (e.g. B.cinerea and A.brassicicola), flowering time and responses to hormones (e.g. abscisic acid ABA and ethylene) through interactions with distinct transcription factors. In Arabidopsis thaliana (Mouse-ear cress), this protein is Mediator of RNA polymerase II transcription subunit 18.